A 539-amino-acid chain; its full sequence is MNQLHRRMGTFSLMMVGLGSMIGSGWLFGAWRAAQIAGPAAIISWVIGMVVILFIALSYSELGSMFPEAGGMVKYTQYSHGSFIGFIAGWANWIAIVSVIPVEAVASVQYMSSWPWEWAKWTSGLVKNGTLTGEGLAFASVLLLIYFLLNYWTVNLFSKANSLITIFKIIIPGLTIGALLFVGFHGENFTGGQSIAPNGWASVLTAVATSGIVFAFNGFQSPINMAGEAKNPGKSIPIAVVGSLFVATVIYVLLQIAFIGAVNPSDIAHGWSHLNFNSPFADLAIALNINWLVIVLYADAFVSPSGTGITYTATTSRMIYGMEKNKYMPSIFGKLHPIYGVPRQAMFFNLIVSFIFLFLFRGWGVLAEIISVATLISYITGPITVMTLRRTGKDLYRPLRLKGLNVIAPLGFIFASLVLYWARWPLTGQVLFIILIGLPIYFYYQAKAKWKGFGRNFKAGVWMVFYLLAMMVISYLGSDKFGGLNVIHYGWDMVLIAMVSLVFYVWALKSGYQTEYLKDAKEINSQLLNGQSEAAAGKE.

13 helical membrane passes run 11–31 (FSLM…FGAW), 36–56 (IAGP…LFIA), 82–102 (SFIG…VIPV), 137–157 (AFAS…VNLF), 164–184 (ITIF…FVGF), 199–219 (GWAS…FNGF), 238–258 (IAVV…QIAF), 283–303 (LAIA…AFVS), 350–370 (LIVS…AEII), 401–421 (LKGL…VLYW), 424–444 (WPLT…YFYY), 457–477 (FKAG…SYLG), and 486–506 (VIHY…FYVW).

Belongs to the amino acid-polyamine-organocation (APC) superfamily. AGT (TC 2.A.3.11) family.

The protein resides in the cell membrane. In terms of biological role, major glutamate and serine transporter. Cannot transport threonine. AimA is the major glutamate transporter under standard growth conditions when glutamate is not limiting in the medium. This chain is Glutamate/serine transporter AimA, found in Bacillus subtilis (strain 168).